The sequence spans 293 residues: Lysosomal amino acid transporter 1 homolog (293 aa).

Residues 1–37 (MVWRTLGASNFSTCPNGSVQWIWDVFGECAQDGWDEA) are Lumenal-facing. N-linked (GlcNAc...) asparagine glycosylation is found at Asn10 and Asn16. One can recognise a PQ-loop 1 domain in the interval 34–100 (WDEASVGLGL…LADQLPLQTY (67 aa)). A helical transmembrane segment spans residues 38–58 (SVGLGLVSILCFAASTFPQYI). The Cytoplasmic portion of the chain corresponds to 59-71 (KACKTGNMDQALS). A helical transmembrane segment spans residues 72-92 (LWFLLGWIGGDSCNLIGSFLA). Residues 93–96 (DQLP) lie on the Lumenal side of the membrane. Residues 97–117 (LQTYTAVYYVLADLMMLTLYF) traverse the membrane as a helical segment. Residues 118–127 (HYKFKKRPSP) lie on the Cytoplasmic side of the membrane. A helical membrane pass occupies residues 128–148 (LSAPINSVLLFILGTVCITPL). Residues 149–182 (LSSTDPVAVPREGFRGRTLLSVEPGNKPFTKKEV) lie on the Lumenal side of the membrane. The chain crosses the membrane as a helical span at residues 183 to 203 (IGFVIGSASSLLYLLSRLPQI). One can recognise a PQ-loop 2 domain in the interval 191–243 (SSLLYLLSRLPQIRTNFIRQSTQGISYSLFALVMLGNTLYGLSVLLKNPEVGQ). Residues 204–214 (RTNFIRQSTQG) lie on the Cytoplasmic side of the membrane. Residues 215–235 (ISYSLFALVMLGNTLYGLSVL) form a helical membrane-spanning segment. The Lumenal portion of the chain corresponds to 236 to 254 (LKNPEVGQSEGSYLLHHLP). The chain crosses the membrane as a helical span at residues 255–275 (WLVGSLGVLLLDTIISIQFLV). Topologically, residues 276–293 (YRSHETAAASEREPLLPS) are cytoplasmic. Positions 290-291 (LL) match the Di-leucine motif motif.

Belongs to the laat-1 family. In terms of tissue distribution, ubiquitously expressed.

The protein localises to the lysosome membrane. Its function is as follows. Amino acid transporter that specifically mediates the pH-dependent export of the cationic amino acids arginine, histidine and lysine from lysosomes. The sequence is that of Lysosomal amino acid transporter 1 homolog from Mus musculus (Mouse).